The following is a 580-amino-acid chain: MKVLLRCQRLRFIWLAKPAGRHFHRDPQLWAPLTLDDFEAINRCEKPLPKNFNFAADVLDQWSLKEKSGERPANPALWWVNGKGDEVKWSFQELGSLSRKAANVLTKPCGLQRGDRVAVILPRIPEWWLINVACMRTGLVFMPGTIQLTRKDILYRLQASKAKCIVASEEVAPAVDSIASECPNLKTKLLVSPHRWDGWLSFQELLQSASEEHNCVQTGSQEPMAIYFTSGTTGSPKMAQHSQSSLGIGYALCGRYWLDLTSSDIMWNMSDTGWIKAAIGSVFSTWLRGACVFVHRMAQFNTDTFLDTLTSYPITTLCSAPTVYRMLVQQDLKRYQFKRLRHCLTGGEPLNPEVLEQWKAQTGLELYEGYGQTEVGIICANRKGEEIKPGSMGKGVVPYDVQIIDEHGNILPSGKEGEIALRLGSDRPFCFFSEYVDNPEKTDATIRRNFYITGDRGVMDDDGYLWFVGRADDVIISSGYRIGPFEVESALIEHPAVVESAVVSSPDPIRGEVVKAFIVLAAPFKSSNREKLTAELQDHVKNSTAPYKYPRKVEFVQELPKTITGKIKRNVLRDQEWGRA.

The N-terminal 22 residues, 1-22 (MKVLLRCQRLRFIWLAKPAGRH), are a transit peptide targeting the mitochondrion. ATP is bound by residues 229–237 (TSGTTGSPK), 368–373 (EGYGQT), aspartate 455, arginine 470, and lysine 566.

Belongs to the ATP-dependent AMP-binding enzyme family. It depends on Mg(2+) as a cofactor. Mn(2+) is required as a cofactor. In terms of tissue distribution, detected in adult olfactory epithelium.

It is found in the mitochondrion. It carries out the reaction a medium-chain fatty acid + ATP + CoA = a medium-chain fatty acyl-CoA + AMP + diphosphate. It catalyses the reaction hexanoate + ATP + CoA = hexanoyl-CoA + AMP + diphosphate. The catalysed reaction is octanoate + ATP + CoA = octanoyl-CoA + AMP + diphosphate. The enzyme catalyses decanoate + ATP + CoA = decanoyl-CoA + AMP + diphosphate. It carries out the reaction dodecanoate + ATP + CoA = dodecanoyl-CoA + AMP + diphosphate. Functionally, catalyzes the activation of fatty acids by CoA to produce an acyl-CoA, the first step in fatty acid metabolism. Capable of activating medium-chain fatty acids with a preference for C6-12 fatty acids. In Rattus norvegicus (Rat), this protein is Acyl-coenzyme A synthetase ACSM4, mitochondrial (Acsm4).